The chain runs to 95 residues: Histone-like DNA-binding protein (95 aa).

Belongs to the bacterial histone-like protein family.

This Rickettsia felis (strain ATCC VR-1525 / URRWXCal2) (Rickettsia azadi) protein is Histone-like DNA-binding protein.